The primary structure comprises 299 residues: Lathosterol oxidase (299 aa).

Helical transmembrane passes span isoleucine 32–leucine 52, phenylalanine 79–leucine 99, and isoleucine 117–isoleucine 137. In terms of domain architecture, Fatty acid hydroxylase spans valine 124 to glycine 252. A Histidine box-1 motif is present at residues histidine 138–histidine 143. A Histidine box-2 motif is present at residues histidine 151–histidine 155. A helical transmembrane segment spans residues valine 186–isoleucine 206. The short motif at histidine 228–histidine 233 is the Histidine box-3 element. A Phosphoserine modification is found at serine 253. The tract at residues phenylalanine 280–lysine 299 is disordered.

It belongs to the sterol desaturase family. The cofactor is Fe cation.

The protein localises to the endoplasmic reticulum membrane. The enzyme catalyses a Delta(7)-sterol + 2 Fe(II)-[cytochrome b5] + O2 + 2 H(+) = a Delta(5),Delta(7)-sterol + 2 Fe(III)-[cytochrome b5] + 2 H2O. It catalyses the reaction lathosterol + 2 Fe(II)-[cytochrome b5] + O2 + 2 H(+) = 7-dehydrocholesterol + 2 Fe(III)-[cytochrome b5] + 2 H2O. The catalysed reaction is 5alpha-cholesta-7,24-dien-3beta-ol + 2 Fe(II)-[cytochrome b5] + O2 + 2 H(+) = 7-dehydrodesmosterol + 2 Fe(III)-[cytochrome b5] + 2 H2O. Its pathway is steroid biosynthesis; cholesterol biosynthesis. Its function is as follows. Catalyzes the penultimate step of the biosynthesis of cholesterol, the dehydrogenation of lathosterol into 7-dehydrocholesterol (7-DHC). Cholesterol is the major sterol component in mammalian membranes and a precursor for bile acid and steroid hormone synthesis. In addition to its essential role in cholesterol biosynthesis, it also indirectly regulates ferroptosis through the production of 7-DHC. By diverting the spread of damage caused by peroxyl radicals from the phospholipid components to its sterol nucleus, 7-DHC prevents this form of cell death. The sequence is that of Lathosterol oxidase from Mus musculus (Mouse).